The chain runs to 667 residues: DNA ligase (667 aa).

NAD(+)-binding positions include 32–36 (DKDYD) and 80–81 (SL). K121 (N6-AMP-lysine intermediate) is an active-site residue. NAD(+) is bound by residues R143, E178, and K314. Zn(2+) contacts are provided by C407, C410, C423, and C429. One can recognise a BRCT domain in the interval 587 to 667 (IVESIFKDKT…EFEKMLGRES (81 aa)).

It belongs to the NAD-dependent DNA ligase family. LigA subfamily. Mg(2+) serves as cofactor. It depends on Mn(2+) as a cofactor.

The catalysed reaction is NAD(+) + (deoxyribonucleotide)n-3'-hydroxyl + 5'-phospho-(deoxyribonucleotide)m = (deoxyribonucleotide)n+m + AMP + beta-nicotinamide D-nucleotide.. In terms of biological role, DNA ligase that catalyzes the formation of phosphodiester linkages between 5'-phosphoryl and 3'-hydroxyl groups in double-stranded DNA using NAD as a coenzyme and as the energy source for the reaction. It is essential for DNA replication and repair of damaged DNA. The sequence is that of DNA ligase from Clostridium botulinum (strain Alaska E43 / Type E3).